Reading from the N-terminus, the 393-residue chain is Phosphoglycerate kinase (393 aa).

Residues 22–24, Arg-37, 60–63, Arg-119, and Arg-152 each bind substrate; these read DFN and HLGR. Residues Lys-202, Gly-293, Glu-324, and 350–353 contribute to the ATP site; that span reads GGDS.

It belongs to the phosphoglycerate kinase family. As to quaternary structure, monomer.

The protein localises to the cytoplasm. The enzyme catalyses (2R)-3-phosphoglycerate + ATP = (2R)-3-phospho-glyceroyl phosphate + ADP. Its pathway is carbohydrate degradation; glycolysis; pyruvate from D-glyceraldehyde 3-phosphate: step 2/5. This is Phosphoglycerate kinase from Borreliella burgdorferi (strain ZS7) (Borrelia burgdorferi).